A 358-amino-acid chain; its full sequence is Chorismate synthase (358 aa).

Arg48 provides a ligand contact to NADP(+). Residues 125-127, Ser277, 292-296, and Arg318 contribute to the FMN site; these read RAS and KPIPS.

This sequence belongs to the chorismate synthase family. As to quaternary structure, homotetramer. It depends on FMNH2 as a cofactor.

The enzyme catalyses 5-O-(1-carboxyvinyl)-3-phosphoshikimate = chorismate + phosphate. It functions in the pathway metabolic intermediate biosynthesis; chorismate biosynthesis; chorismate from D-erythrose 4-phosphate and phosphoenolpyruvate: step 7/7. Functionally, catalyzes the anti-1,4-elimination of the C-3 phosphate and the C-6 proR hydrogen from 5-enolpyruvylshikimate-3-phosphate (EPSP) to yield chorismate, which is the branch point compound that serves as the starting substrate for the three terminal pathways of aromatic amino acid biosynthesis. This reaction introduces a second double bond into the aromatic ring system. The sequence is that of Chorismate synthase from Desulfatibacillum aliphaticivorans.